The following is a 120-amino-acid chain: uncharacterized protein (120 aa).

The protein to phage T4 y06Q.

This is an uncharacterized protein from Escherichia coli (strain K12).